We begin with the raw amino-acid sequence, 494 residues long: Argininosuccinate synthase, chloroplastic (494 aa).

A chloroplast-targeting transit peptide spans 1 to 73 (MAEISATSFP…SRSCKNQAIR (73 aa)). A74 carries the N-acetylalanine modification. ATP-binding positions include 102-110 (AYSGGLDTS) and A129. Residues Y181 and S186 each coordinate L-citrulline. G211 contacts ATP. Residues T213, N217, and D218 each contribute to the L-aspartate site. An L-citrulline-binding site is contributed by N217. Residues R221, S270, S279, E355, and Y367 each contribute to the L-citrulline site.

It belongs to the argininosuccinate synthase family. Type 1 subfamily. In terms of assembly, homotetramer.

The protein localises to the plastid. It is found in the chloroplast. It catalyses the reaction L-citrulline + L-aspartate + ATP = 2-(N(omega)-L-arginino)succinate + AMP + diphosphate + H(+). It functions in the pathway amino-acid biosynthesis; L-arginine biosynthesis; L-arginine from L-ornithine and carbamoyl phosphate: step 2/3. This is Argininosuccinate synthase, chloroplastic from Arabidopsis thaliana (Mouse-ear cress).